The primary structure comprises 963 residues: Phosphofurin acidic cluster sorting protein 1 (963 aa).

Residues 1–22 are compositionally biased toward gly residues; that stretch reads MAERGGAGGGPGGAGGGSGQRG. Disordered stretches follow at residues 1-72 and 78-97; these read MAER…SSST and VAVA…RTPA. The residue at position 2 (alanine 2) is an N-acetylalanine. Residue serine 28 is modified to Phosphoserine. Phosphothreonine is present on threonine 46. Positions 53 to 72 are enriched in low complexity; sequence ATSSSSSTSAAAASSSSSST. Residues 168 to 175 form an involved in binding to AP-1 region; it reads ETELQLTF. Tyrosine 251 bears the Phosphotyrosine mark. A compositionally biased stretch (basic and acidic residues) spans 262–273; the sequence is GIKSKLSDRSPD. Disordered regions lie at residues 262–299 and 377–428; these read GIKS…LHGQ and NPSD…GKDT. Residues 276-293 show a composition bias toward acidic residues; that stretch reads NYSEEEEESFSSEQEGSD. Positions 353 to 377 form a coiled coil; the sequence is HVSREQIREVEEDLDELYDSLEMYN. Serine 379 and serine 381 each carry phosphoserine. Residues 406–428 show a composition bias toward polar residues; that stretch reads MSQSSSQTEIGSLNSKGSLGKDT. Residues serine 430 and serine 495 each carry the phosphoserine modification. Disordered regions lie at residues 476–542 and 760–804; these read PEKV…HSTQ and SPST…SMSS. The segment covering 483–496 has biased composition (polar residues); it reads MKSSKTDLQGSASP. Threonine 504 bears the Phosphothreonine mark. A phosphoserine mark is found at serine 519, serine 528, serine 529, serine 531, and serine 534. Residues 770-804 are compositionally biased toward low complexity; sequence SPVVSLTVPSTSPPSSSGLSRDATATPPSSPSMSS.

Belongs to the PACS family. Associates with AP-1 and AP-3 but not with AP-2 complexes. Interacts with FURIN. Forms a ternary complex with FURIN and AP-1. Interacts with NPHP1; the interaction is dependent of NPHP1 phosphorylation by CK2. Interacts with PKD2 (via acidic region). Interacts with SORL1. Interacts with WDR37. In terms of assembly, (Microbial infection) Interacts with HIV-1 Nef. As to quaternary structure, (Microbial infection) Interacts with Epstein-barr virus protein BBLF1.

The protein resides in the golgi apparatus. Its subcellular location is the trans-Golgi network. Coat protein that is involved in the localization of trans-Golgi network (TGN) membrane proteins that contain acidic cluster sorting motifs. Controls the endosome-to-Golgi trafficking of furin and mannose-6-phosphate receptor by connecting the acidic-cluster-containing cytoplasmic domain of these molecules with the adapter-protein complex-1 (AP-1) of endosomal clathrin-coated membrane pits. Involved in HIV-1 nef-mediated removal of MHC-I from the cell surface to the TGN. Required for normal ER Ca2+ handling in lymphocytes. Together with WDR37, it plays an essential role in lymphocyte development, quiescence and survival. Required for stabilizing peripheral lymphocyte populations. The polypeptide is Phosphofurin acidic cluster sorting protein 1 (PACS1) (Homo sapiens (Human)).